We begin with the raw amino-acid sequence, 282 residues long: Transcription factor MYB20 (282 aa).

2 HTH myb-type domains span residues 9–61 and 62–116; these read KVGL…TNYL and RPDL…KKKL. 2 consecutive DNA-binding regions (H-T-H motif) follow at residues 37 to 61 and 89 to 112; these read WRAVPKLSGLLRCGKSCRLRWTNYL and WSKIASHLPGRTDNEIKNHWNTHI.

In terms of tissue distribution, expressed in chalaza of mature seeds, cotyledons, rosette leaves, cauline leaves, veins of stems, mature siliques, sepals and styles. Expressed at low levels in roots.

The protein resides in the nucleus. Transcription factor that acts as a positive regulator of abscisic acid (ABA) signaling in response to salt stress. Acts as a negative regulator ABI1, ABI2 and PP2CA, which are protein phosphatases 2C acting as negative regulator of ABA signaling. Binds to the DNA specific sequence and core element 5'-ACGT-3' found in the promoters of ABI1 and PP2CA to negatively regulate their expression during ABA-dependent salt stress response. In Arabidopsis thaliana (Mouse-ear cress), this protein is Transcription factor MYB20.